A 157-amino-acid polypeptide reads, in one-letter code: SsrA-binding protein (157 aa).

Over residues 136-151 (KRETEKKRDWSREKGR) the composition is skewed to basic and acidic residues. The interval 136 to 157 (KRETEKKRDWSREKGRLLRARG) is disordered.

The protein belongs to the SmpB family.

The protein resides in the cytoplasm. Functionally, required for rescue of stalled ribosomes mediated by trans-translation. Binds to transfer-messenger RNA (tmRNA), required for stable association of tmRNA with ribosomes. tmRNA and SmpB together mimic tRNA shape, replacing the anticodon stem-loop with SmpB. tmRNA is encoded by the ssrA gene; the 2 termini fold to resemble tRNA(Ala) and it encodes a 'tag peptide', a short internal open reading frame. During trans-translation Ala-aminoacylated tmRNA acts like a tRNA, entering the A-site of stalled ribosomes, displacing the stalled mRNA. The ribosome then switches to translate the ORF on the tmRNA; the nascent peptide is terminated with the 'tag peptide' encoded by the tmRNA and targeted for degradation. The ribosome is freed to recommence translation, which seems to be the essential function of trans-translation. The sequence is that of SsrA-binding protein from Rhodopseudomonas palustris (strain HaA2).